Here is a 188-residue protein sequence, read N- to C-terminus: Nicotinamide/nicotinic acid mononucleotide adenylyltransferase (188 aa).

This sequence belongs to the archaeal NMN adenylyltransferase family.

It catalyses the reaction beta-nicotinamide D-ribonucleotide + ATP + H(+) = diphosphate + NAD(+). The catalysed reaction is nicotinate beta-D-ribonucleotide + ATP + H(+) = deamido-NAD(+) + diphosphate. Its pathway is cofactor biosynthesis; NAD(+) biosynthesis; NAD(+) from nicotinamide D-ribonucleotide: step 1/1. The protein operates within cofactor biosynthesis; NAD(+) biosynthesis; deamido-NAD(+) from nicotinate D-ribonucleotide: step 1/1. Functionally, dual substrate specificity enzyme that catalyzes the formation of NAD(+) from nicotinamide mononucleotide (NMN) and the formation of deamido-NAD(+) (NaAD) from nicotinate mononucleotide (NaMN). Shows nearly identical catalytic efficiency for both physiological substrates. Plays an essential role in all three routes of NAD biogenesis, de novo synthesis as well as the deamidating and nondeamidating salvage pathways. The polypeptide is Nicotinamide/nicotinic acid mononucleotide adenylyltransferase (Acinetobacter baylyi (strain ATCC 33305 / BD413 / ADP1)).